The sequence spans 391 residues: Methyltransferase/ribosomally synthesized type I borosin cyclic peptide precursor cmaMA (391 aa).

The segment at 1 to 253 is methyltransferase domain; that stretch reads MDATANPKAG…TISTFYLPPK (253 aa). Residues R72, Y76, and Y98 contribute to the active site. The S-adenosyl-L-methionine site is built by Y98, H100, V103, A130, Q172, A215, S246, and T247. Positions 254-373 are clasp domain; the sequence is APSAKVSLNR…AQLSGALKEG (120 aa). The segment at 374–376 is precursor leader; the sequence is GVP. Residue L382 is modified to N-methylleucine. Residues F385 and F386 each carry the N-methylphenylalanine modification. I387 and I388 each carry N-methylisoleucine.

This sequence in the N-terminal section; belongs to the precorrin methyltransferase family. As to quaternary structure, homodimer. CmaMA automethylates at Leu-382, Phe-385, Phe-386, Ile-387 and Ile-388 before being processed by the prolyloligopeptidase ledP which likely forms a peptidyl ester upon removal of the follower propeptide, which then undergoes macrocyclization with the N-terminus of the modified core peptide. Peptide backbone alpha-N-methylations change the physicochemical properties of amide bonds to provide structural constraints and other favorable characteristics including biological membrane permeability to peptides.

It functions in the pathway secondary metabolite biosynthesis. Fusion protein of the methyltransferase cmaM and a type I borosin core peptide; part of the gene cluster that mediates the biosynthesis of a type I borosin, a highly methylated cyclic peptide with potent biological activities. Type I borosins derive from the C-terminus of the fusion protein, and it is the same protein that methylates its own C-terminus using S-adenosyl methionine (SAM). The C-terminus is subsequently cleaved off and macrocyclized by a prolyloligopeptidase to give the final product. In Coprinopsis marcescibilis (Agaric fungus), this protein is Methyltransferase/ribosomally synthesized type I borosin cyclic peptide precursor cmaMA.